A 456-amino-acid chain; its full sequence is Phosphomannomutase (456 aa).

Residue Ser-98 is the Phosphoserine intermediate of the active site. Residues Ser-98, Asp-245, Asp-247, and Asp-249 each coordinate Mg(2+).

It belongs to the phosphohexose mutase family. The cofactor is Mg(2+).

It carries out the reaction alpha-D-mannose 1-phosphate = D-mannose 6-phosphate. Its pathway is nucleotide-sugar biosynthesis; GDP-alpha-D-mannose biosynthesis; alpha-D-mannose 1-phosphate from D-fructose 6-phosphate: step 2/2. It participates in bacterial outer membrane biogenesis; LPS O-antigen biosynthesis. Functionally, involved in GDP-mannose biosynthesis which serves as the activated sugar nucleotide precursor for mannose residues in cell surface polysaccharides. This enzyme participates in synthesis of the LPS O antigen. The sequence is that of Phosphomannomutase (manB) from Salmonella montevideo.